Here is a 280-residue protein sequence, read N- to C-terminus: Probable endonuclease lcl3 (280 aa).

A helical membrane pass occupies residues 50–67 (TLIPTLILTTAILSAARF). A TNase-like domain is found at 89 to 257 (RSIYGKVTSV…KLKGNGMWKG (169 aa)). Arg-140 is an active-site residue. Ca(2+) is bound at residue Asp-145. Catalysis depends on residues Glu-148 and Arg-188.

It belongs to the LCL3 family.

Its subcellular location is the mitochondrion. It is found in the membrane. The polypeptide is Probable endonuclease lcl3 (lcl3) (Emericella nidulans (strain FGSC A4 / ATCC 38163 / CBS 112.46 / NRRL 194 / M139) (Aspergillus nidulans)).